The chain runs to 445 residues: Sporulation protein YkvU (445 aa).

A run of 12 helical transmembrane segments spans residues Gly7–Leu29, Gly39–Ile61, Ala82–Ile104, Thr109–Ala131, Ile144–Tyr166, Met172–Ser194, Val237–Ala259, Val269–Ser291, Ile312–Thr334, Leu349–Gly371, Ala376–Gly395, and Leu400–Ala422.

The protein resides in the forespore membrane. This chain is Sporulation protein YkvU (ykvU), found in Bacillus subtilis (strain 168).